Here is a 242-residue protein sequence, read N- to C-terminus: Peptidyl-prolyl cis-trans isomerase FKBP20-2, chloroplastic (242 aa).

A chloroplast-targeting transit peptide spans 1 to 31 (MVTILSTPLSPRLTFLCETKLSLSRSNRSVC). The transit peptide at 32-67 (CSLSEEPKDQCLSRRSLVYVLVASPCLLLPALSSSA) directs the protein to the thylakoid. The PPIase FKBP-type domain occupies 138-225 (GQQVTFHYIG…VFDVELLSIQ (88 aa)). C227 and C241 are joined by a disulfide.

The protein belongs to the FKBP-type PPIase family. In terms of assembly, interacts in vitro with LTO1.

The protein localises to the plastid. It is found in the chloroplast thylakoid lumen. The enzyme catalyses [protein]-peptidylproline (omega=180) = [protein]-peptidylproline (omega=0). Functionally, PPIases accelerate the folding of proteins. It catalyzes the cis-trans isomerization of proline imidic peptide bonds in oligopeptides. Involved in the accumulation of the PSII complex. The sequence is that of Peptidyl-prolyl cis-trans isomerase FKBP20-2, chloroplastic from Arabidopsis thaliana (Mouse-ear cress).